The following is a 352-amino-acid chain: Maleylacetate reductase (352 aa).

The protein belongs to the iron-containing alcohol dehydrogenase family.

The catalysed reaction is 3-oxoadipate + NAD(+) = maleylacetate + NADH + H(+). The enzyme catalyses 3-oxoadipate + NADP(+) = maleylacetate + NADPH + H(+). Its pathway is aromatic compound metabolism; 3-chlorocatechol degradation. This Pseudomonas aeruginosa protein is Maleylacetate reductase (clcE).